Reading from the N-terminus, the 339-residue chain is DNA-directed RNA polymerase subunit alpha (339 aa).

The alpha N-terminal domain (alpha-NTD) stretch occupies residues Met-1–Glu-235. Positions Phe-251–Tyr-339 are alpha C-terminal domain (alpha-CTD).

Belongs to the RNA polymerase alpha chain family. As to quaternary structure, homodimer. The RNAP catalytic core consists of 2 alpha, 1 beta, 1 beta' and 1 omega subunit. When a sigma factor is associated with the core the holoenzyme is formed, which can initiate transcription.

The catalysed reaction is RNA(n) + a ribonucleoside 5'-triphosphate = RNA(n+1) + diphosphate. DNA-dependent RNA polymerase catalyzes the transcription of DNA into RNA using the four ribonucleoside triphosphates as substrates. The chain is DNA-directed RNA polymerase subunit alpha from Rhodopseudomonas palustris (strain BisA53).